The chain runs to 442 residues: F-box only protein 39 (442 aa).

The F-box domain occupies 16–61 (WAFLPDLCLCRVFWWLGDRDRSRAALVCRKWNQMMYSAELWRYRTI).

As to quaternary structure, directly interacts with SKP1 and CUL1.

Functionally, substrate-recognition component of the SCF (SKP1-CUL1-F-box protein)-type E3 ubiquitin ligase complex. The polypeptide is F-box only protein 39 (FBXO39) (Homo sapiens (Human)).